The primary structure comprises 152 residues: Diamine acetyltransferase (152 aa).

The N-acetyltransferase domain maps to 5-152; that stretch reads FEVRKATIDD…SFLDLTPKSD (148 aa). The active-site Proton donor is Y127.

The protein belongs to the acetyltransferase family. Homotetramer.

The protein localises to the cytoplasm. The enzyme catalyses an alkane-alpha,omega-diamine + acetyl-CoA = an N-acetylalkane-alpha,omega-diamine + CoA + H(+). It functions in the pathway amine and polyamine degradation; putrescine degradation; N-acetylputrescine from putrescine: step 1/1. In terms of biological role, enzyme which catalyzes the acetylation of polyamines. Displays higher substrate specificity for spermine than for spermidine. May function to acetylate host-derived polyamines, thus alleviating the necessity for de novo synthesis of these molecules. This Cryptosporidium parvum (strain Iowa II) protein is Diamine acetyltransferase.